Here is an 88-residue protein sequence, read N- to C-terminus: Small ribosomal subunit protein uS17c (88 aa).

It belongs to the universal ribosomal protein uS17 family. Part of the 30S ribosomal subunit.

It is found in the plastid. The protein localises to the cyanelle. In terms of biological role, one of the primary rRNA binding proteins, it binds specifically to the 5'-end of 16S ribosomal RNA. This chain is Small ribosomal subunit protein uS17c (rps17), found in Cyanophora paradoxa.